The following is a 140-amino-acid chain: General stress protein 26 (140 aa).

This chain is General stress protein 26 (ydaG), found in Bacillus subtilis (strain 168).